The sequence spans 721 residues: DNA ligase (721 aa).

Over residues 1 to 19 the composition is skewed to low complexity; the sequence is MTAKKQGAQASASAPSGDS. Residues 1 to 23 form a disordered region; the sequence is MTAKKQGAQASASAPSGDSPAER. Residues 48-52, 97-98, and E162 contribute to the NAD(+) site; these read DADYD and SL. The active-site N6-AMP-lysine intermediate is K164. The NAD(+) site is built by R185, E221, K338, and K362. 4 residues coordinate Zn(2+): C456, C459, C474, and C480. The region spanning 639-721 is the BRCT domain; sequence RAPLPLAGKT…LKLLAEVGAA (83 aa).

The protein belongs to the NAD-dependent DNA ligase family. LigA subfamily. Mg(2+) serves as cofactor. Mn(2+) is required as a cofactor.

It carries out the reaction NAD(+) + (deoxyribonucleotide)n-3'-hydroxyl + 5'-phospho-(deoxyribonucleotide)m = (deoxyribonucleotide)n+m + AMP + beta-nicotinamide D-nucleotide.. Functionally, DNA ligase that catalyzes the formation of phosphodiester linkages between 5'-phosphoryl and 3'-hydroxyl groups in double-stranded DNA using NAD as a coenzyme and as the energy source for the reaction. It is essential for DNA replication and repair of damaged DNA. This Cupriavidus metallidurans (strain ATCC 43123 / DSM 2839 / NBRC 102507 / CH34) (Ralstonia metallidurans) protein is DNA ligase.